A 373-amino-acid chain; its full sequence is Protein CAF40 (373 aa).

Positions 1 to 91 (MFSAQKPIYG…ANATRNNPNM (91 aa)) are disordered. A compositionally biased stretch (gly residues) spans 11-22 (NGAGVNMGGGGP). Residues 50–88 (GGPMLMGNTPNNNNSNENGENNGNNGNNGGNDANATRNN) show a composition bias toward low complexity.

The protein belongs to the CNOT9 family. As to quaternary structure, subunit of the 1.0 MDa CCR4-NOT core complex that contains CCR4, CAF1, NOT1, NOT2, NOT3, NOT4, NOT5, CAF40 and CAF130. In the complex interacts with NOT1. The core complex probably is part of a less characterized 1.9 MDa CCR4-NOT complex.

The protein localises to the cytoplasm. It is found in the nucleus. In terms of biological role, acts as a component of the CCR4-NOT core complex, which in the nucleus seems to be a general transcription factor, and in the cytoplasm the major mRNA deadenylase involved in mRNA turnover. The polypeptide is Protein CAF40 (CAF40) (Saccharomyces cerevisiae (strain ATCC 204508 / S288c) (Baker's yeast)).